The primary structure comprises 217 residues: Somatotropin (217 aa).

A signal peptide spans 1-27; the sequence is MATGSHTATLLLAVALLGLPWPQEAGA. Position 46 (histidine 46) interacts with Zn(2+). The cysteines at positions 79 and 190 are disulfide-linked. At serine 132 the chain carries Phosphoserine. Residue glutamate 199 coordinates Zn(2+). Cysteine 207 and cysteine 215 are oxidised to a cystine.

This sequence belongs to the somatotropin/prolactin family.

It localises to the secreted. Plays an important role in growth control. Its major role in stimulating body growth is to stimulate the liver and other tissues to secrete IGF1. It stimulates both the differentiation and proliferation of myoblasts. It also stimulates amino acid uptake and protein synthesis in muscle and other tissues. This is Somatotropin (GH1) from Xanthonycticebus pygmaeus (Pygmy slow loris).